Reading from the N-terminus, the 570-residue chain is DNA polymerase/3'-5' exonuclease PolX (570 aa).

The DNA polymerase type-X stretch occupies residues 1–315 (MHKKDIIRLL…PLIPPEIRES (315 aa)). The a divalent metal cation site is built by aspartate 193, aspartate 195, and aspartate 240. The tract at residues 333–570 (QIKGDLHMHS…DVEAFLKRND (238 aa)) is 3'-5' exonuclease. Positions 339, 341, 371, 410, 437, 465, 526, and 528 each coordinate Mn(2+).

The protein in the N-terminal section; belongs to the DNA polymerase type-X family. It in the C-terminal section; belongs to the PHP family. As to quaternary structure, monomer. Requires Mn(2+) as cofactor. The cofactor is Mg(2+).

It catalyses the reaction DNA(n) + a 2'-deoxyribonucleoside 5'-triphosphate = DNA(n+1) + diphosphate. The catalysed reaction is Exonucleolytic cleavage in the 3'- to 5'-direction to yield nucleoside 5'-phosphates.. The polymerization activity is inhibited in the presence of 2'-3'-dideoxynucleoside 5'-triphosphate (ddNTP). Its function is as follows. Strictly DNA-template-directed DNA polymerase, preferentially acting on DNA structures containing gaps from one to a few nucleotides and bearing a phosphate group at the 5' end of the downstream DNA. The fact that PolX is able to conduct filling of a single-nucleotide gap, allowing further sealing of the resulting nick by a DNA ligase, points to a putative role in base excision repair (BER) during the B.subtilis life cycle. Moreover, also possesses a 3'-5' exonuclease activity able to edit unpaired 3'-termini in a gapped DNA substrate and likely involved in resecting unannealed 3'-termini during DNA repair. The same PolX molecule could perform the subsequent gap-filling step. Does not display 5'-deoxyribose 5'-phosphate (dRP) lyase activity, as predicted by the lack of the lysine and tyrosine residues responsible for the dRP lyase activity in some other PolX members. In Bacillus subtilis (strain 168), this protein is DNA polymerase/3'-5' exonuclease PolX (polX).